A 488-amino-acid polypeptide reads, in one-letter code: Coagulation factor X (488 aa).

Residues 1-31 (MGRPLHLVLLSASLAGLLLLGESLFIRREQA) form the signal peptide. The propeptide occupies 32 to 40 (NNILARVTR). The 45-residue stretch at 41–85 (ANSFLEEMKKGHLERECMEETCSYEEAREVFEDSDKTNEFWNKYK) folds into the Gla domain. 4-carboxyglutamate is present on residues Glu46, Glu47, Glu54, Glu56, Glu59, Glu60, Glu65, Glu66, Glu69, Glu72, and Glu79. A disulfide bond links Cys57 and Cys62. Residues 86 to 122 (DGDQCETSPCQNQGKCKDGLGEYTCTCLEGFEGKNCE) enclose the EGF-like 1; calcium-binding domain. 11 disulfide bridges follow: Cys90–Cys101, Cys95–Cys110, Cys112–Cys121, Cys129–Cys140, Cys136–Cys149, Cys151–Cys164, Cys172–Cys342, Cys241–Cys246, Cys261–Cys277, Cys390–Cys404, and Cys415–Cys443. (3R)-3-hydroxyaspartate is present on Asp103. The EGF-like 2 domain occupies 125 to 165 (TRKLCSLDNGDCDQFCHEEQNSVVCSCARGYTLADNGKACI). Residues 183–203 (SVAQATSSSGEAPDSITWKPY) are O-glycosylated at one site. The propeptide at 183–234 (SVAQATSSSGEAPDSITWKPYDAADLDPTENPFDLLDFNQTQPERGDNNLTR) is activation peptide. O-linked (GalNAc...) threonine glycosylation is found at Thr199 and Thr211. 2 N-linked (GlcNAc...) asparagine glycosylation sites follow: Asn221 and Asn231. A Peptidase S1 domain is found at 235–467 (IVGGQECKDG…FLKWIDRSMK (233 aa)). Catalysis depends on charge relay system residues His276 and Asp322. The active-site Charge relay system is the Ser419. An O-glycosylated at one site region spans residues 476 to 485 (SHAPEVITSS).

It belongs to the peptidase S1 family. The two chains are formed from a single-chain precursor by the excision of two Arg residues and are held together by 1 or more disulfide bonds. Forms a heterodimer with SERPINA5. Interacts (inactive and activated) with ixolaris, an anticoagulant protein from Ixodes scapularis saliva. Interacts (activated) with iripin-8, a serine protease inhibitor from Ixodes ricinus saliva. Interacts (activated) with FXa-directed anticoagulant from Aedes albopictus saliva. Interacts (activated) with guianensin, an anticoagulant protein from Simulium guianense saliva. Interacts (activated) with simukunin, an anticoagulant protein from Simulium vittatum saliva. In terms of processing, the vitamin K-dependent, enzymatic carboxylation of some glutamate residues allows the modified protein to bind calcium. Post-translationally, N- and O-glycosylated. O-glycosylated with core 1 or possibly core 8 glycans. Proteolytically cleaved and activated by cathepsin CTSG. The activation peptide is cleaved by factor IXa (in the intrinsic pathway), or by factor VIIa (in the extrinsic pathway). In terms of processing, the iron and 2-oxoglutarate dependent 3-hydroxylation of aspartate and asparagine is (R) stereospecific within EGF domains. As to expression, plasma; synthesized in the liver.

The protein localises to the secreted. It catalyses the reaction Selective cleavage of Arg-|-Thr and then Arg-|-Ile bonds in prothrombin to form thrombin.. Inhibited by SERPINA5 and SERPINA10. In terms of biological role, factor Xa is a vitamin K-dependent glycoprotein that converts prothrombin to thrombin in the presence of factor Va, calcium and phospholipid during blood clotting. Factor Xa activates pro-inflammatory signaling pathways in a protease-activated receptor (PAR)-dependent manner. Up-regulates expression of protease-activated receptors (PARs) F2R, F2RL1 and F2RL2 in dermal microvascular endothelial cells. Triggers the production of pro-inflammatory cytokines, such as MCP-1/CCL2 and IL6, in cardiac fibroblasts and umbilical vein endothelial cells in PAR-1/F2R-dependent manner. Triggers the production of pro-inflammatory cytokines, such as MCP-1/CCL2, IL6, TNF-alpha/TNF, IL-1beta/IL1B, IL8/CXCL8 and IL18, in endothelial cells and atrial tissues. Induces expression of adhesion molecules, such as ICAM1, VCAM1 and SELE, in endothelial cells and atrial tissues. Increases expression of phosphorylated ERK1/2 in dermal microvascular endothelial cells and atrial tissues. Triggers activation of the transcription factor NF-kappa-B in dermal microvascular endothelial cells and atrial tissues. Activates pro-inflammatory and pro-fibrotic responses in dermal fibroblasts and enhances wound healing probably via PAR-2/F2RL1-dependent mechanism. Activates barrier protective signaling responses in endothelial cells in PAR-2/F2RL1-dependent manner; the activity depends on the cleavage of PAR-2/F2RL1 by factor Xa. Up-regulates expression of plasminogen activator inhibitor 1 (SERPINE1) in atrial tissues. This is Coagulation factor X (F10) from Homo sapiens (Human).